We begin with the raw amino-acid sequence, 1402 residues long: Nuclear pore complex protein Nup160 (1402 aa).

Residues Ser-10, Ser-456, Ser-915, and Ser-1123 each carry the phosphoserine modification.

As to quaternary structure, part of the nuclear pore complex (NPC). Forms part of the NUP160 subcomplex in the nuclear pore which is composed of NUP160, NUP133, NUP107 and NUP96. This complex plays a role in RNA export and in tethering NUP98 and NUP153 to the nucleus.

The protein resides in the nucleus. It is found in the nuclear pore complex. Functions as a component of the nuclear pore complex (NPC). Involved in poly(A)+ RNA transport. The chain is Nuclear pore complex protein Nup160 (Nup160) from Mus musculus (Mouse).